We begin with the raw amino-acid sequence, 381 residues long: Transaldolase 2 (381 aa).

The active-site Schiff-base intermediate with substrate is lysine 141.

Belongs to the transaldolase family. Type 2 subfamily.

The protein localises to the cytoplasm. The enzyme catalyses D-sedoheptulose 7-phosphate + D-glyceraldehyde 3-phosphate = D-erythrose 4-phosphate + beta-D-fructose 6-phosphate. Its pathway is carbohydrate degradation; pentose phosphate pathway; D-glyceraldehyde 3-phosphate and beta-D-fructose 6-phosphate from D-ribose 5-phosphate and D-xylulose 5-phosphate (non-oxidative stage): step 2/3. In terms of biological role, transaldolase is important for the balance of metabolites in the pentose-phosphate pathway. The chain is Transaldolase 2 (tal2) from Nostoc punctiforme (strain ATCC 29133 / PCC 73102).